The primary structure comprises 459 residues: Argininosuccinate lyase (459 aa).

Belongs to the lyase 1 family. Argininosuccinate lyase subfamily.

The protein localises to the cytoplasm. It carries out the reaction 2-(N(omega)-L-arginino)succinate = fumarate + L-arginine. It participates in amino-acid biosynthesis; L-arginine biosynthesis; L-arginine from L-ornithine and carbamoyl phosphate: step 3/3. The sequence is that of Argininosuccinate lyase from Prochlorococcus marinus (strain MIT 9515).